The following is a 147-amino-acid chain: MRDNTIGSLIWLRLIRFTNQSNQLSNEFLKRFDLTTAQFDVLLQIRTYQPLTQMELAEKVTVTQGGISRMLTRLEKEGYIVRKQDWKTKTISLTEQGEAALERALPEQLAFQSSFFDDVLNEEEQKILYELMTKVHKHSEKKELPQE.

The region spanning 1–137 (MRDNTIGSLI…LYELMTKVHK (137 aa)) is the HTH marR-type domain. Residues 53 to 76 (QMELAEKVTVTQGGISRMLTRLEK) constitute a DNA-binding region (H-T-H motif).

This is an uncharacterized protein from Bacillus cereus (strain ATCC 14579 / DSM 31 / CCUG 7414 / JCM 2152 / NBRC 15305 / NCIMB 9373 / NCTC 2599 / NRRL B-3711).